A 273-amino-acid polypeptide reads, in one-letter code: Spore development regulator vosA (273 aa).

The segment covering 66 to 75 (STTQELQSTQ) has biased composition (low complexity). Residues 66–86 (STTQELQSTQPIAVRQQPRAA) form a disordered region. Positions 70–253 (ELQSTQPIAV…KEQGCIISIK (184 aa)) constitute a Velvet domain. The Nuclear localization signal signature appears at 211 to 218 (FPTLTEIK). The span at 254-267 (KGNERARPRGADGR) shows a compositional bias: basic and acidic residues. A disordered region spans residues 254–273 (KGNERARPRGADGRSDDEDD).

It belongs to the velvet family. VosA subfamily. Forms a heterodimeric complex with velB; the formation of the velB-vosA complex is light-dependent.

The protein localises to the nucleus. Component of the velB-vosA heterodimeric complex that plays a dual role in activating genes associated with spore maturation and repressing certain development-associated genes. The complex binds DNA through the DNA-binding domain of vosA that recognizes an 11-nucleotide consensus sequence 5'-CTGGCCGCGGC-3' consisting of two motifs in the promoters of key developmental regulatory genes. Positively regulates the expression of wetA and represses abaA and brlA. Acts as a crucial regulator of both conidiation capacity and conidial quality. Responsible for the synthesis and accumulation of intracellular trehalose. In Beauveria bassiana (strain ARSEF 2860) (White muscardine disease fungus), this protein is Spore development regulator vosA.